The primary structure comprises 251 residues: Aspartate/glutamate leucyltransferase (251 aa).

The protein belongs to the R-transferase family. Bpt subfamily.

It localises to the cytoplasm. The catalysed reaction is N-terminal L-glutamyl-[protein] + L-leucyl-tRNA(Leu) = N-terminal L-leucyl-L-glutamyl-[protein] + tRNA(Leu) + H(+). The enzyme catalyses N-terminal L-aspartyl-[protein] + L-leucyl-tRNA(Leu) = N-terminal L-leucyl-L-aspartyl-[protein] + tRNA(Leu) + H(+). In terms of biological role, functions in the N-end rule pathway of protein degradation where it conjugates Leu from its aminoacyl-tRNA to the N-termini of proteins containing an N-terminal aspartate or glutamate. The polypeptide is Aspartate/glutamate leucyltransferase (Xanthomonas euvesicatoria pv. vesicatoria (strain 85-10) (Xanthomonas campestris pv. vesicatoria)).